The sequence spans 325 residues: Elongation factor P--(R)-beta-lysine ligase (325 aa).

76–78 (SPE) serves as a coordination point for substrate. Residues 100-102 (RNE) and asparagine 109 each bind ATP. Tyrosine 118 is a substrate binding site. 244–245 (EL) lines the ATP pocket. Residue glutamate 251 participates in substrate binding. Glycine 300 lines the ATP pocket.

This sequence belongs to the class-II aminoacyl-tRNA synthetase family. EpmA subfamily. Homodimer.

The enzyme catalyses D-beta-lysine + L-lysyl-[protein] + ATP = N(6)-((3R)-3,6-diaminohexanoyl)-L-lysyl-[protein] + AMP + diphosphate + H(+). Functionally, with EpmB is involved in the beta-lysylation step of the post-translational modification of translation elongation factor P (EF-P). Catalyzes the ATP-dependent activation of (R)-beta-lysine produced by EpmB, forming a lysyl-adenylate, from which the beta-lysyl moiety is then transferred to the epsilon-amino group of a conserved specific lysine residue in EF-P. The polypeptide is Elongation factor P--(R)-beta-lysine ligase (Erwinia tasmaniensis (strain DSM 17950 / CFBP 7177 / CIP 109463 / NCPPB 4357 / Et1/99)).